A 295-amino-acid polypeptide reads, in one-letter code: Diaminopimelate epimerase (295 aa).

Substrate contacts are provided by N11 and N67. C76 acts as the Proton donor in catalysis. Substrate contacts are provided by residues 77 to 78, N171, N210, and 228 to 229; these read GN and ER. C237 functions as the Proton acceptor in the catalytic mechanism. Residue 238–239 coordinates substrate; sequence GT.

It belongs to the diaminopimelate epimerase family. In terms of assembly, homodimer.

The protein localises to the cytoplasm. It catalyses the reaction (2S,6S)-2,6-diaminopimelate = meso-2,6-diaminopimelate. The protein operates within amino-acid biosynthesis; L-lysine biosynthesis via DAP pathway; DL-2,6-diaminopimelate from LL-2,6-diaminopimelate: step 1/1. Catalyzes the stereoinversion of LL-2,6-diaminopimelate (L,L-DAP) to meso-diaminopimelate (meso-DAP), a precursor of L-lysine. The polypeptide is Diaminopimelate epimerase (Methanocaldococcus jannaschii (strain ATCC 43067 / DSM 2661 / JAL-1 / JCM 10045 / NBRC 100440) (Methanococcus jannaschii)).